The chain runs to 189 residues: Pyridoxal 5'-phosphate synthase subunit PdxT (189 aa).

47 to 49 (GES) provides a ligand contact to L-glutamine. The active-site Nucleophile is the Cys-79. L-glutamine is bound by residues Arg-106 and 135-136 (IR). Active-site charge relay system residues include His-171 and Glu-173.

It belongs to the glutaminase PdxT/SNO family. In terms of assembly, in the presence of PdxS, forms a dodecamer of heterodimers. Only shows activity in the heterodimer.

The catalysed reaction is aldehydo-D-ribose 5-phosphate + D-glyceraldehyde 3-phosphate + L-glutamine = pyridoxal 5'-phosphate + L-glutamate + phosphate + 3 H2O + H(+). The enzyme catalyses L-glutamine + H2O = L-glutamate + NH4(+). The protein operates within cofactor biosynthesis; pyridoxal 5'-phosphate biosynthesis. Catalyzes the hydrolysis of glutamine to glutamate and ammonia as part of the biosynthesis of pyridoxal 5'-phosphate. The resulting ammonia molecule is channeled to the active site of PdxS. In Desulforudis audaxviator (strain MP104C), this protein is Pyridoxal 5'-phosphate synthase subunit PdxT.